The following is a 148-amino-acid chain: NPC intracellular cholesterol transporter 2 homolog a (148 aa).

A signal peptide spans 1 to 16 (MLRYAVIACAALVVFA). Intrachain disulfides connect cysteine 24/cysteine 140, cysteine 39/cysteine 46, and cysteine 92/cysteine 99. Asparagine 51 is a glycosylation site (N-linked (GlcNAc...) asparagine).

Belongs to the NPC2 family. In terms of tissue distribution, broadly expressed with a higher level of expression in many tissues, including midgut, salivary gland and ventral nerve cord.

The protein localises to the secreted. Functions redundantly with Npc2b in regulating sterol homeostasis and ecdysteroid biosynthesis, probably by controlling the availability of sterol substrate. The chain is NPC intracellular cholesterol transporter 2 homolog a from Drosophila melanogaster (Fruit fly).